Consider the following 398-residue polypeptide: Acetate kinase 1 (398 aa).

Asparagine 10 is a Mg(2+) binding site. Residue lysine 17 participates in ATP binding. Arginine 89 is a substrate binding site. Aspartate 146 acts as the Proton donor/acceptor in catalysis. ATP is bound by residues 206-210 (HLGNG), 281-283 (DCR), and 329-333 (GIGEN). Glutamate 384 contributes to the Mg(2+) binding site.

Belongs to the acetokinase family. In terms of assembly, homodimer. Mg(2+) is required as a cofactor. Mn(2+) serves as cofactor.

It localises to the cytoplasm. It catalyses the reaction acetate + ATP = acetyl phosphate + ADP. Its pathway is metabolic intermediate biosynthesis; acetyl-CoA biosynthesis; acetyl-CoA from acetate: step 1/2. In terms of biological role, catalyzes the formation of acetyl phosphate from acetate and ATP. Can also catalyze the reverse reaction. The polypeptide is Acetate kinase 1 (Neisseria meningitidis serogroup A / serotype 4A (strain DSM 15465 / Z2491)).